Here is an 86-residue protein sequence, read N- to C-terminus: Small ribosomal subunit protein bS20 (86 aa).

Residues 1–22 are compositionally biased toward basic residues; sequence MANIKSAKKRAVQSEKRRKHNA. The disordered stretch occupies residues 1-28; that stretch reads MANIKSAKKRAVQSEKRRKHNASGRSMM.

The protein belongs to the bacterial ribosomal protein bS20 family.

Functionally, binds directly to 16S ribosomal RNA. In Serratia proteamaculans (strain 568), this protein is Small ribosomal subunit protein bS20.